Here is a 64-residue protein sequence, read N- to C-terminus: Bowman-Birk type trypsin inhibitor TI1 (64 aa).

5 cysteine pairs are disulfide-bonded: cysteine 9-cysteine 61, cysteine 10-cysteine 25, cysteine 15-cysteine 23, cysteine 32-cysteine 39, and cysteine 36-cysteine 49.

The protein belongs to the Bowman-Birk serine protease inhibitor family.

This Coix lacryma-jobi (Job's tears) protein is Bowman-Birk type trypsin inhibitor TI1.